The following is a 175-amino-acid chain: NADH-ubiquinone oxidoreductase chain 6 (175 aa).

Transmembrane regions (helical) follow at residues 1–21 (MMTY…VGFS), 25–45 (SPIY…GIVL), 47–67 (FGGS…MLVV), 88–108 (AVLG…CYIL), and 149–169 (YGTW…LVIM).

This sequence belongs to the complex I subunit 6 family. Core subunit of respiratory chain NADH dehydrogenase (Complex I) which is composed of 45 different subunits.

The protein resides in the mitochondrion inner membrane. The enzyme catalyses a ubiquinone + NADH + 5 H(+)(in) = a ubiquinol + NAD(+) + 4 H(+)(out). Functionally, core subunit of the mitochondrial membrane respiratory chain NADH dehydrogenase (Complex I) which catalyzes electron transfer from NADH through the respiratory chain, using ubiquinone as an electron acceptor. Essential for the catalytic activity and assembly of complex I. This is NADH-ubiquinone oxidoreductase chain 6 (MT-ND6) from Phoca vitulina (Harbor seal).